A 403-amino-acid polypeptide reads, in one-letter code: Argininosuccinate synthase (403 aa).

An ATP-binding site is contributed by 10–18 (AYSGGVDTS). Tyr-89 contacts L-citrulline. ATP is bound at residue Gly-119. L-aspartate is bound by residues Thr-121, Asn-125, and Asp-126. Asn-125 contacts L-citrulline. Residues Arg-129, Ser-177, Ser-186, Glu-262, and Tyr-274 each contribute to the L-citrulline site.

Belongs to the argininosuccinate synthase family. Type 1 subfamily. As to quaternary structure, homotetramer.

Its subcellular location is the cytoplasm. It carries out the reaction L-citrulline + L-aspartate + ATP = 2-(N(omega)-L-arginino)succinate + AMP + diphosphate + H(+). Its pathway is amino-acid biosynthesis; L-arginine biosynthesis; L-arginine from L-ornithine and carbamoyl phosphate: step 2/3. This is Argininosuccinate synthase from Synechococcus sp. (strain JA-3-3Ab) (Cyanobacteria bacterium Yellowstone A-Prime).